We begin with the raw amino-acid sequence, 639 residues long: Chaperone protein DnaK (639 aa).

T198 carries the post-translational modification Phosphothreonine; by autocatalysis. The interval 597–639 (AYSAGQSAEGAPHAAGAEASAQSRTDDGVVDADFEEVDEKKGH) is disordered. The segment covering 603 to 617 (SAEGAPHAAGAEASA) has biased composition (low complexity). Residues 624–633 (GVVDADFEEV) show a composition bias toward acidic residues.

This sequence belongs to the heat shock protein 70 family.

Acts as a chaperone. The protein is Chaperone protein DnaK of Rhodospirillum rubrum (strain ATCC 11170 / ATH 1.1.1 / DSM 467 / LMG 4362 / NCIMB 8255 / S1).